The primary structure comprises 242 residues: Pyridoxine 5'-phosphate synthase (242 aa).

A 3-amino-2-oxopropyl phosphate-binding site is contributed by Asn6. 8–9 (DH) contributes to the 1-deoxy-D-xylulose 5-phosphate binding site. A 3-amino-2-oxopropyl phosphate-binding site is contributed by Arg17. The Proton acceptor role is filled by His42. 1-deoxy-D-xylulose 5-phosphate-binding residues include Arg44 and His49. Residue Glu69 is the Proton acceptor of the active site. Thr99 is a binding site for 1-deoxy-D-xylulose 5-phosphate. Residue His193 is the Proton donor of the active site. Residues Gly194 and 217–218 (GH) each bind 3-amino-2-oxopropyl phosphate.

The protein belongs to the PNP synthase family. In terms of assembly, homooctamer; tetramer of dimers.

It localises to the cytoplasm. The enzyme catalyses 3-amino-2-oxopropyl phosphate + 1-deoxy-D-xylulose 5-phosphate = pyridoxine 5'-phosphate + phosphate + 2 H2O + H(+). The protein operates within cofactor biosynthesis; pyridoxine 5'-phosphate biosynthesis; pyridoxine 5'-phosphate from D-erythrose 4-phosphate: step 5/5. Functionally, catalyzes the complicated ring closure reaction between the two acyclic compounds 1-deoxy-D-xylulose-5-phosphate (DXP) and 3-amino-2-oxopropyl phosphate (1-amino-acetone-3-phosphate or AAP) to form pyridoxine 5'-phosphate (PNP) and inorganic phosphate. In Aquifex aeolicus (strain VF5), this protein is Pyridoxine 5'-phosphate synthase.